Here is a 494-residue protein sequence, read N- to C-terminus: NAD(P)H-quinone oxidoreductase subunit 2 B, chloroplastic (494 aa).

14 consecutive transmembrane segments (helical) span residues 13–33 (SILP…IDLI), 39–59 (TPWL…ILLF), 81–101 (IFRL…IDYI), 107–127 (ALTE…FLCC), 131–151 (LVTI…LSGY), 166–186 (LLMG…LYGL), 211–231 (MFIS…LVPF), 243–263 (PTPV…ALAT), 277–297 (WHLL…FIAV), 305–325 (MLAY…IAAE), 336–356 (YMLI…LFGL), 378–398 (LSLV…GFFG), 411–433 (LYFL…LKII), and 468–488 (MIIC…IIAI).

This sequence belongs to the complex I subunit 2 family. In terms of assembly, NDH is composed of at least 16 different subunits, 5 of which are encoded in the nucleus.

The protein resides in the plastid. It localises to the chloroplast thylakoid membrane. It carries out the reaction a plastoquinone + NADH + (n+1) H(+)(in) = a plastoquinol + NAD(+) + n H(+)(out). The catalysed reaction is a plastoquinone + NADPH + (n+1) H(+)(in) = a plastoquinol + NADP(+) + n H(+)(out). Functionally, NDH shuttles electrons from NAD(P)H:plastoquinone, via FMN and iron-sulfur (Fe-S) centers, to quinones in the photosynthetic chain and possibly in a chloroplast respiratory chain. The immediate electron acceptor for the enzyme in this species is believed to be plastoquinone. Couples the redox reaction to proton translocation, and thus conserves the redox energy in a proton gradient. The polypeptide is NAD(P)H-quinone oxidoreductase subunit 2 B, chloroplastic (Angiopteris evecta (Mule's foot fern)).